The following is a 78-amino-acid chain: Beta-defensin 105A (78 aa).

Residues 1–27 (MALIKKTFFFLFAMFFILVQLSSGCQA) form the signal peptide. Cystine bridges form between Cys43-Cys74, Cys53-Cys67, and Cys57-Cys73.

Belongs to the beta-defensin family.

It is found in the secreted. In terms of biological role, has antimicrobial activity. This Pan troglodytes (Chimpanzee) protein is Beta-defensin 105A (DEFB105A).